A 225-amino-acid polypeptide reads, in one-letter code: ATP-dependent dethiobiotin synthetase BioD (225 aa).

An ATP-binding site is contributed by 12–17 (GVGKTV). Residue threonine 16 participates in Mg(2+) binding. The active site involves lysine 37. Threonine 41 lines the substrate pocket. ATP is bound by residues aspartate 46, 105–108 (EGAG), 166–167 (GS), and 196–198 (PEG). Mg(2+) is bound by residues aspartate 46 and glutamate 105.

Belongs to the dethiobiotin synthetase family. Homodimer. Requires Mg(2+) as cofactor.

Its subcellular location is the cytoplasm. The enzyme catalyses (7R,8S)-7,8-diammoniononanoate + CO2 + ATP = (4R,5S)-dethiobiotin + ADP + phosphate + 3 H(+). The protein operates within cofactor biosynthesis; biotin biosynthesis; biotin from 7,8-diaminononanoate: step 1/2. Its function is as follows. Catalyzes a mechanistically unusual reaction, the ATP-dependent insertion of CO2 between the N7 and N8 nitrogen atoms of 7,8-diaminopelargonic acid (DAPA, also called 7,8-diammoniononanoate) to form a ureido ring. In Mycobacteroides abscessus (strain ATCC 19977 / DSM 44196 / CCUG 20993 / CIP 104536 / JCM 13569 / NCTC 13031 / TMC 1543 / L948) (Mycobacterium abscessus), this protein is ATP-dependent dethiobiotin synthetase BioD.